Consider the following 936-residue polypeptide: 2-oxoglutarate dehydrogenase E1 component (936 aa).

Belongs to the alpha-ketoglutarate dehydrogenase family. As to quaternary structure, homodimer. Part of the 2-oxoglutarate dehydrogenase (OGDH) complex composed of E1 (2-oxoglutarate dehydrogenase), E2 (dihydrolipoamide succinyltransferase) and E3 (dihydrolipoamide dehydrogenase); the complex contains multiple copies of the three enzymatic components (E1, E2 and E3). Thiamine diphosphate serves as cofactor.

It carries out the reaction N(6)-[(R)-lipoyl]-L-lysyl-[protein] + 2-oxoglutarate + H(+) = N(6)-[(R)-S(8)-succinyldihydrolipoyl]-L-lysyl-[protein] + CO2. E1 component of the 2-oxoglutarate dehydrogenase (OGDH) complex which catalyzes the decarboxylation of 2-oxoglutarate, the first step in the conversion of 2-oxoglutarate to succinyl-CoA and CO(2). The protein is 2-oxoglutarate dehydrogenase E1 component (sucA) of Rickettsia prowazekii (strain Madrid E).